We begin with the raw amino-acid sequence, 110 residues long: Protein YcgL (110 aa).

The region spanning 14 to 98 (MFCVIYRSSK…PPEDLLKQHL (85 aa)) is the YcgL domain. The disordered stretch occupies residues 88-110 (PPPEDLLKQHLSSVGQNTSHADR). Polar residues predominate over residues 97-110 (HLSSVGQNTSHADR).

In Salmonella schwarzengrund (strain CVM19633), this protein is Protein YcgL.